Here is a 24-residue protein sequence, read N- to C-terminus: Aldehyde dehydrogenase gamma chain (24 aa).

In terms of assembly, heterotrimer composed of an alpha, a beta and a gamma chain. Requires [2Fe-2S] cluster as cofactor.

It catalyses the reaction an aldehyde + a quinone + H2O = a quinol + a carboxylate + H(+). This is Aldehyde dehydrogenase gamma chain from Comamonas testosteroni (Pseudomonas testosteroni).